Consider the following 321-residue polypeptide: Ribosomal RNA small subunit methyltransferase H (321 aa).

Residues alanine 33–histidine 35, aspartate 58, phenylalanine 85, aspartate 111, and glutamine 118 each bind S-adenosyl-L-methionine.

The protein belongs to the methyltransferase superfamily. RsmH family.

It is found in the cytoplasm. It catalyses the reaction cytidine(1402) in 16S rRNA + S-adenosyl-L-methionine = N(4)-methylcytidine(1402) in 16S rRNA + S-adenosyl-L-homocysteine + H(+). In terms of biological role, specifically methylates the N4 position of cytidine in position 1402 (C1402) of 16S rRNA. This Chloroherpeton thalassium (strain ATCC 35110 / GB-78) protein is Ribosomal RNA small subunit methyltransferase H.